Consider the following 266-residue polypeptide: Probable sulfate transport system permease protein cysT (266 aa).

A run of 7 helical transmembrane segments spans residues 12-32 (ILLF…FLLI), 59-79 (MAFY…WVLT), 91-111 (AAVD…LATV), 129-149 (IVFT…PFVI), 181-201 (VILP…FSRA), 206-226 (GSIV…SVLI), and 236-256 (LGAS…LLLI). Residues 53-257 (YLLTVQMAFY…IALFTLLLIN (205 aa)) enclose the ABC transmembrane type-1 domain.

It belongs to the binding-protein-dependent transport system permease family. CysTW subfamily.

Its subcellular location is the plastid. The protein resides in the chloroplast membrane. In terms of biological role, part of the ABC transporter complex cysAWTP (TC 3.A.1.6.1) involved in sulfate/thiosulfate import. Probably responsible for the translocation of the substrate across the membrane. The protein is Probable sulfate transport system permease protein cysT (cysT) of Chlorella vulgaris (Green alga).